The primary structure comprises 391 residues: tRNA(Met) cytidine acetate ligase (391 aa).

ATP contacts are provided by residues 7 to 20 (IAEYNPLHNGHIYQ), G101, N153, and R178.

The protein belongs to the TmcAL family.

It is found in the cytoplasm. It catalyses the reaction cytidine(34) in elongator tRNA(Met) + acetate + ATP = N(4)-acetylcytidine(34) in elongator tRNA(Met) + AMP + diphosphate. Its function is as follows. Catalyzes the formation of N(4)-acetylcytidine (ac(4)C) at the wobble position of elongator tRNA(Met), using acetate and ATP as substrates. First activates an acetate ion to form acetyladenylate (Ac-AMP) and then transfers the acetyl group to tRNA to form ac(4)C34. In Latilactobacillus sakei subsp. sakei (strain 23K) (Lactobacillus sakei subsp. sakei), this protein is tRNA(Met) cytidine acetate ligase.